Reading from the N-terminus, the 338-residue chain is MNVFYDKDADLSLIKGKQVTIIGYGSQGHAHALNLKDSGVNVTVGLRKGGASWSKAENAGLSVKEVAEAVKGADVVMMLLPDEQIADVYAKEVHANIKQGAALAFAHGFNVHYGAVIPRADLDVIMIAPKAPGHTVRGTYSQGGGVPHLIAVAQNKSGAARDIALSYAAANGGGRAGIIETNFREETETDLFGEQAVLCGGTVELIKAGFETLVEAGYAPEMAYFECLHELKLIVDLIYEGGIANMNYSISNNAEYGEYVTGPRIVTEETKKAMKQCLTDIQTGEYAKSFILENKAGAPTLQSRRRLTAEHQIEQVGAKLRAMMPWIAKNKLVDQTKN.

A KARI N-terminal Rossmann domain is found at M1–T181. NADP(+) contacts are provided by residues Y24–Q27, R47, and S52. H107 is a catalytic residue. G133 provides a ligand contact to NADP(+). Residues N182 to I327 form the KARI C-terminal knotted domain. D190, E194, E226, and E230 together coordinate Mg(2+). S251 contributes to the substrate binding site.

It belongs to the ketol-acid reductoisomerase family. Requires Mg(2+) as cofactor.

It carries out the reaction (2R)-2,3-dihydroxy-3-methylbutanoate + NADP(+) = (2S)-2-acetolactate + NADPH + H(+). The enzyme catalyses (2R,3R)-2,3-dihydroxy-3-methylpentanoate + NADP(+) = (S)-2-ethyl-2-hydroxy-3-oxobutanoate + NADPH + H(+). The protein operates within amino-acid biosynthesis; L-isoleucine biosynthesis; L-isoleucine from 2-oxobutanoate: step 2/4. It functions in the pathway amino-acid biosynthesis; L-valine biosynthesis; L-valine from pyruvate: step 2/4. In terms of biological role, involved in the biosynthesis of branched-chain amino acids (BCAA). Catalyzes an alkyl-migration followed by a ketol-acid reduction of (S)-2-acetolactate (S2AL) to yield (R)-2,3-dihydroxy-isovalerate. In the isomerase reaction, S2AL is rearranged via a Mg-dependent methyl migration to produce 3-hydroxy-3-methyl-2-ketobutyrate (HMKB). In the reductase reaction, this 2-ketoacid undergoes a metal-dependent reduction by NADPH to yield (R)-2,3-dihydroxy-isovalerate. In Burkholderia cenocepacia (strain ATCC BAA-245 / DSM 16553 / LMG 16656 / NCTC 13227 / J2315 / CF5610) (Burkholderia cepacia (strain J2315)), this protein is Ketol-acid reductoisomerase (NADP(+)).